The chain runs to 1620 residues: MPARTAPARVPALASPAGSLPDHVRRRLKDLERDGLTEKECVREKLNLLHEFLQTEIKSQLCDLETKLHKEELSEEGYLAKVKSLLNKDLSLENGTHTLTQKANGCPANGSRPTWRAEMADSNRSPRSRPKPRGPRRSKSDSDTLSVETSPSSVATRRTTRQTTITAHFTKGPTKRKPKEESEEGNSAESAAEERDQDKKRRVVDTESGAAAAVEKLEEVTAGTQLGPEEPCEQEDDNRSLRRHTRELSLRRKSKEDPDREARPETHLDEDEDGKKDKRSSRPRSQPRDPAAKRRPKEAEPEQVAPETPEDRDEDEREEKRRKTTRKKLESHTVPVQSRSERKAAQSKSVIPKINSPKCPECGQHLDDPNLKYQQHPEDAVDEPQMLTSEKLSIYDSTSTWFDTYEDSPMHRFTSFSVYCSRGHLCPVDTGLIEKNVELYFSGCAKAIHDENPSMEGGINGKNLGPINQWWLSGFDGGEKVLIGFSTAFAEYILMEPSKEYEPIFGLMQEKIYISKIVVEFLQNNPDAVYEDLINKIETTVPPSTINVNRFTEDSLLRHAQFVVSQVESYDEAKDDDETPIFLSPCMRALIHLAGVSLGQRRATRRVMGATKEKDKAPTKATTTKLVYQIFDTFFSEQIEKYDKEDKENAMKRRRCGVCEVCQQPECGKCKACKDMVKFGGTGRSKQACLKRRCPNLAVKEADDDEEADDDVSEMPSPKKLHQGKKKKQNKDRISWLGQPMKIEENRTYYQKVSIDEEMLEVGDCVSVIPDDSSKPLYLARVTALWEDKNGQMMFHAHWFCAGTDTVLGATSDPLELFLVGECENMQLSYIHSKVKVIYKAPSENWAMEGGTDPETTLPGAEDGKTYFFQLWYNQEYARFESPPKTQPTEDNKHKFCLSCIRLAELRQKEMPKVLEQIEEVDGRVYCSSITKNGVVYRLGDSVYLPPEAFTFNIKVASPVKRPKKDPVNETLYPEHYRKYSDYIKGSNLDAPEPYRIGRIKEIHCGKKKGKVNEADIKLRLYKFYRPENTHRSYNGSYHTDINMLYWSDEEAVVNFSDVQGRCTVEYGEDLLESIQDYSQGGPDRFYFLEAYNSKTKNFEDPPNHARSPGNKGKGKGKGKGKGKHQVSEPKEPEAAIKLPKLRTLDVFSGCGGLSEGFHQAGISETLWAIEMWDPAAQAFRLNNPGTTVFTEDCNVLLKLVMAGEVTNSLGQRLPQKGDVEMLCGGPPCQGFSGMNRFNSRTYSKFKNSLVVSFLSYCDYYRPRFFLLENVRNFVSYRRSMVLKLTLRCLVRMGYQCTFGVLQAGQYGVAQTRRRAIILAAAPGEKLPLFPEPLHVFAPRACQLSVVVDDKKFVSNITRLSSGPFRTITVRDTMSDLPEIQNGASNSEIPYNGEPLSWFQRQLRGSHYQPILRDHICKDMSPLVAARMRHIPLFPGSDWRDLPNIQVRLGDGVIAHKLQYTFHDVKNGYSSTGALRGVCSCAEGKACDPESRQFSTLIPWCLPHTGNRHNHWAGLYGRLEWDGFFSTTVTNPEPMGKQGRVLHPEQHRVVSVRECARSQGFPDSYRFFGNILDRHRQVGNAVPPPLAKAIGLEIKLCLLSSARESASAAVKAKEEAATKD.

The interval 1-21 is disordered; that stretch reads MPARTAPARVPALASPAGSLP. The interaction with DMAP1 stretch occupies residues 1 to 120; it reads MPARTAPARV…SRPTWRAEMA (120 aa). The tract at residues 1–145 is interaction with DNMT3A; it reads MPARTAPARV…RRSKSDSDTL (145 aa). 2 interaction with the PRC2/EED-EZH2 complex regions span residues 1–343 and 305–609; these read MPAR…SERK and APET…RVMG. Position 15 is a phosphoserine (Ser-15). The region spanning 16–109 is the DMAP1-binding domain; that stretch reads PAGSLPDHVR…TQKANGCPAN (94 aa). Position 70 is an N6,N6-dimethyllysine; by EHMT2 (Lys-70). Residues 96 to 369 are disordered; it reads THTLTQKANG…PECGQHLDDP (274 aa). A compositionally biased stretch (basic residues) spans 126 to 137; it reads PRSRPKPRGPRR. Ser-138 is subject to Phosphoserine. The residue at position 139 (Lys-139) is an N6-methyllysine; by SETD7. The residue at position 140 (Ser-140) is a Phosphoserine. The segment covering 144–155 has biased composition (polar residues); it reads TLSVETSPSSVA. A Phosphoserine; by CK1 modification is found at Ser-146. Positions 147 to 217 are interaction with DNMT3B; the sequence is VETSPSSVAT…SGAAAAVEKL (71 aa). Phosphoserine occurs at positions 150 and 152. Residues 161 to 172 are interaction with PCNA; the sequence is RQTTITAHFTKG. Thr-164 is subject to Phosphothreonine. Residue Lys-171 is modified to N6-acetyllysine. The Nuclear localization signal motif lies at 175–202; the sequence is KRKPKEESEEGNSAESAAEERDQDKKRR. Basic and acidic residues predominate over residues 192-205; sequence AEERDQDKKRRVVD. Ser-240 carries the phosphoserine modification. Composition is skewed to basic and acidic residues over residues 246–267 and 286–300; these read RELS…PETH and QPRD…KEAE. Lys-255 carries the N6-acetyllysine; alternate modification. Residue Lys-255 forms a Glycyl lysine isopeptide (Lys-Gly) (interchain with G-Cter in SUMO2); alternate linkage. Residues 308–317 show a composition bias toward acidic residues; that stretch reads TPEDRDEDER. The DNA replication foci-targeting sequence stretch occupies residues 328-556; the sequence is KLESHTVPVQ…NVNRFTEDSL (229 aa). Positions 359 and 362 each coordinate Zn(2+). At Lys-372 the chain carries N6-acetyllysine. Zn(2+) contacts are provided by Cys-420 and His-424. Phosphoserine occurs at positions 515 and 555. The CXXC-type zinc-finger motif lies at 649–695; it reads NAMKRRRCGVCEVCQQPECGKCKACKDMVKFGGTGRSKQACLKRRCP. Zn(2+) contacts are provided by Cys-656, Cys-659, Cys-662, Cys-667, Cys-670, Cys-673, Cys-689, and Cys-694. The tract at residues 696–757 is autoinhibitory linker; that stretch reads NLAVKEADDD…TYYQKVSIDE (62 aa). An interaction with HDAC1 region spans residues 696-813; sequence NLAVKEADDD…TDTVLGATSD (118 aa). Residues 702–713 show a composition bias toward acidic residues; the sequence is ADDDEEADDDVS. Positions 702-732 are disordered; it reads ADDDEEADDDVSEMPSPKKLHQGKKKKQNKD. Ser-713 and Ser-717 each carry phosphoserine. The segment covering 719-730 has biased composition (basic residues); sequence KKLHQGKKKKQN. A Phosphoserine modification is found at Ser-735. Lys-752 is subject to N6-acetyllysine. Positions 758-884 constitute a BAH 1 domain; the sequence is EMLEVGDCVS…QEYARFESPP (127 aa). Ser-882 carries the post-translational modification Phosphoserine. N6-acetyllysine is present on residues Lys-895, Lys-961, Lys-965, and Lys-979. A BAH 2 domain is found at 976–1103; the sequence is HYRKYSDYIK…SKTKNFEDPP (128 aa). Positions 1097–1136 are disordered; that stretch reads KNFEDPPNHARSPGNKGKGKGKGKGKGKHQVSEPKEPEAA. Tandem repeats lie at residues 1112–1113, 1114–1115, 1116–1117, 1118–1119, 1120–1121, and 1122–1123. Residues 1112–1125 are 7 X 2 AA tandem repeats of K-G; the sequence is KGKGKGKGKGKGKH. The span at 1113–1125 shows a compositional bias: basic residues; the sequence is GKGKGKGKGKGKH. An N6-acetyllysine mark is found at Lys-1114, Lys-1116, Lys-1118, Lys-1120, Lys-1122, and Lys-1124. One copy of the 7; approximate repeat lies at 1124 to 1125; that stretch reads KH. The interval 1124-1620 is interaction with the PRC2/EED-EZH2 complex; sequence KHQVSEPKEP…KAKEEAATKD (497 aa). Over residues 1126-1135 the composition is skewed to basic and acidic residues; that stretch reads QVSEPKEPEA. One can recognise an SAM-dependent MTase C5-type domain in the interval 1142–1601; it reads LRTLDVFSGC…LEIKLCLLSS (460 aa). A catalytic region spans residues 1142–1620; sequence LRTLDVFSGC…KAKEEAATKD (479 aa). S-adenosyl-L-methionine is bound by residues Ser-1149, 1153–1154, 1171–1172, and 1193–1194; these read GL, EM, and DC. The active site involves Cys-1229. Residues Lys-1352 and Lys-1418 each carry the N6-acetyllysine modification. Position 1582 (Val-1582) interacts with S-adenosyl-L-methionine. A Glycyl lysine isopeptide (Lys-Gly) (interchain with G-Cter in SUMO2) cross-link involves residue Lys-1611.

Belongs to the class I-like SAM-binding methyltransferase superfamily. C5-methyltransferase family. In terms of assembly, homodimer. Forms a stable complex with E2F1, BB1 and HDAC1. Forms a complex with DMAP1 and HDAC2, with direct interaction. Interacts with the PRC2/EED-EZH2 complex. Probably part of a corepressor complex containing ZNF304, TRIM28, SETDB1 and DNMT1. Interacts with UHRF1; promoting its recruitment to hemimethylated DNA. Interacts with USP7, promoting its deubiquitination. Interacts with BAZ2A/TIP5. Interacts with PCNA. Interacts with MBD2 and MBD3. Interacts with DNMT3A and DNMT3B. Interacts with UBC9. Interacts with HDAC1. Interacts with CSNK1D. Interacts with SIRT7. Interacts with ZNF263; recruited to the SIX3 promoter along with other proteins involved in chromatin modification and transcriptional corepression where it contributes to transcriptional repression. Interacts with L3MBTL3 and DCAF5; the interaction requires DNMT1 methylation at Lys-139 and is necessary to target DNMT1 for ubiquitination by the CRL4-DCAF5 E3 ubiquitin ligase complex and proteasomal degradation. Interacts with PHF20L1; the interaction requires DNMT1 methylation at Lys-139 and protects DNMT1 from ubiquitination and proteasomal degradation. Sumoylated; sumoylation increases activity. In terms of processing, phosphorylation at Ser-146 by CK1 reduces DNA-binding activity. Post-translationally, acetylation on multiple lysines, mainly by KAT2B/PCAF, regulates cell cycle G(2)/M transition. Deacetylation of Lys-1352 and Lys-1418 by SIRT1 increases methyltransferase activity. Phosphorylation of Ser-152 by CDKs is important for enzymatic activity and protein stability. Phosphorylation of Ser-140 by AKT1 prevents methylation by SETD7 thereby increasing DNMT1 stability. In terms of processing, methylation at Lys-139 by SETD7 is necessary for the regulation of DNMT1 proteasomal degradation. Post-translationally, ubiquitinated by UHRF1; interaction with USP7 counteracts ubiquitination by UHRF1 by promoting deubiquitination and preventing degradation by the proteasome. In terms of tissue distribution, isoform 1 is expressed in embryonic stem cells and in somatic tissues. Isoform 2 is expressed in oocytes, preimplantation embryos, testis and in skeletal muscle during myogenesis.

Its subcellular location is the nucleus. The protein localises to the cytoplasm. The catalysed reaction is a 2'-deoxycytidine in DNA + S-adenosyl-L-methionine = a 5-methyl-2'-deoxycytidine in DNA + S-adenosyl-L-homocysteine + H(+). Its activity is regulated as follows. Allosterically regulated. The binding of 5-methylcytosine-containing DNA to the N-terminal parts of DNMT1 causes an allosteric activation of the catalytic domain by a direct interaction of its Zn-binding domain with the catalytic domain. Its function is as follows. Methylates CpG residues. Preferentially methylates hemimethylated DNA. Associates with DNA replication sites in S phase maintaining the methylation pattern in the newly synthesized strand, that is essential for epigenetic inheritance. Associates with chromatin during G2 and M phases to maintain DNA methylation independently of replication. It is responsible for maintaining methylation patterns established in development. DNA methylation is coordinated with methylation of histones. Mediates transcriptional repression by direct binding to HDAC2. In association with DNMT3B and via the recruitment of CTCFL/BORIS, involved in activation of BAG1 gene expression by modulating dimethylation of promoter histone H3 at H3K4 and H3K9. Probably forms a corepressor complex required for activated KRAS-mediated promoter hypermethylation and transcriptional silencing of tumor suppressor genes (TSGs) or other tumor-related genes in colorectal cancer (CRC) cells. Also required to maintain a transcriptionally repressive state of genes in undifferentiated embryonic stem cells (ESCs). Associates at promoter regions of tumor suppressor genes (TSGs) leading to their gene silencing. Promotes tumor growth. This Mus musculus (Mouse) protein is DNA (cytosine-5)-methyltransferase 1 (Dnmt1).